The sequence spans 395 residues: Nicotinamide/nicotinic acid mononucleotide adenylyltransferase 2 (395 aa).

Disordered regions lie at residues 1–34 (MDPT…SGPI) and 62–102 (KKNA…NGID). The segment covering 9 to 24 (FKPPQPNEELQPPPDP) has biased composition (pro residues). Phosphoserine occurs at positions 85, 89, and 90. Residues S167 and F168 each contribute to the NAD(+) site. 2 residues coordinate ATP: H175 and R209. 6 residues coordinate NAD(+): T247, G282, D284, W295, R314, and N345. 350–353 (TKVR) serves as a coordination point for ATP.

The protein belongs to the eukaryotic NMN adenylyltransferase family. It depends on Co(2+) as a cofactor.

It is found in the nucleus. It catalyses the reaction beta-nicotinamide D-ribonucleotide + ATP + H(+) = diphosphate + NAD(+). The enzyme catalyses nicotinate beta-D-ribonucleotide + ATP + H(+) = deamido-NAD(+) + diphosphate. It participates in cofactor biosynthesis; NAD(+) biosynthesis; deamido-NAD(+) from nicotinate D-ribonucleotide: step 1/1. The protein operates within cofactor biosynthesis; NAD(+) biosynthesis; NAD(+) from nicotinamide D-ribonucleotide: step 1/1. Its function is as follows. Catalyzes the formation of NAD(+) from nicotinamide mononucleotide (NMN) and ATP. Can also use the deamidated form; nicotinic acid mononucleotide (NaMN) as substrate to form deamido-NAD(+) (NaAD). Key enzyme in both de novo and salvage pathways for NAD(+) biosynthesis. Predominantly acts in the salvage pathways via NMN. This is Nicotinamide/nicotinic acid mononucleotide adenylyltransferase 2 from Saccharomyces cerevisiae (strain ATCC 204508 / S288c) (Baker's yeast).